A 533-amino-acid polypeptide reads, in one-letter code: INAEKMVLKFGRKTRKFATYVVAAGLQYGAEGGMLHTFFKMAWLGEIPALPVFGDGTNVIPTIHVLDLAGVIQNVIDHTPKPHYLVAVDESVHTLEDIVKCISKNTGPGKIQKIPRENAYLTKDLTQDCLDHLLVNLRMEALFVKENFNIRWVAQTGFVENINSILKEYKQSRGLMPVKICILGPPAVGKSSIAEELAKYYKLHHIQLKDVISEAIAKLETIVAPKDIGEGKEEVEEEEEEENVEDAQELLDGIKESMEQNAGQLDDQYIIRFMKEKLKSMPCRNQGYILDGFPKTYDQAKDLFNQEDEEEEDEVRGRMFPFDKLIIPEFVCALDASDEFLKERVINLPERIVAGTHYSQDRFLRALSNYRDINIEDETVFNYFDEIEIHPIHIDVGKLEDAQNRLAIKQLIKEIGEPRNYGLTDEEKAEEERKAAEERLAREAAEEAEREHQEAVEMAEKIARWEEWNKRLEEVKREERELLEAQSIPLRNYLMTYVMPTLIQGLNECCNVRPEDPVDFLAEYLFKNNPEAQ.

An adenylate kinase region spans residues 177–426; sequence PVKICILGPP…EPRNYGLTDE (250 aa). Residue 187–192 participates in ATP binding; sequence AVGKSS. The interval 207-265 is NMP; the sequence is QLKDVISEAIAKLETIVAPKDIGEGKEEVEEEEEEENVEDAQELLDGIKESMEQNAGQL. AMP-binding positions include 242–265, 292–295, and Gln299; these read ENVE…AGQL and GFPK. An LID region spans residues 347-357; it reads NLPERIVAGTH. Residue Arg365 coordinates AMP. Gly397 contacts ATP. A coiled-coil region spans residues 419–487; that stretch reads RNYGLTDEEK…EERELLEAQS (69 aa). The interval 489 to 533 is DPY-30; it reads PLRNYLMTYVMPTLIQGLNECCNVRPEDPVDFLAEYLFKNNPEAQ.

It in the central section; belongs to the adenylate kinase family. In the C-terminal section; belongs to the dpy-30 family.

The protein resides in the cytoplasm. It is found in the cytosol. The protein localises to the cell projection. It localises to the cilium. Its subcellular location is the flagellum. The enzyme catalyses AMP + ATP = 2 ADP. It carries out the reaction a 2'-deoxyribonucleoside 5'-diphosphate + ATP = a 2'-deoxyribonucleoside 5'-triphosphate + ADP. The catalysed reaction is a ribonucleoside 5'-diphosphate + ATP = a ribonucleoside 5'-triphosphate + ADP. Functionally, nucleoside monophosphate (NMP) kinase that catalyzes the reversible transfer of the terminal phosphate group between nucleoside triphosphates and monophosphates. Has highest activity toward AMP, and weaker activity toward dAMP, CMP and dCMP. Also displays broad nucleoside diphosphate kinase activity. Involved in maintaining ciliary structure and function. This is Adenylate kinase 7 (AK7) from Macaca fascicularis (Crab-eating macaque).